A 426-amino-acid chain; its full sequence is CinA-like protein (426 aa).

It belongs to the CinA family.

The sequence is that of CinA-like protein from Gloeobacter violaceus (strain ATCC 29082 / PCC 7421).